Here is a 79-residue protein sequence, read N- to C-terminus: Putative membrane protein insertion efficiency factor (79 aa).

It belongs to the UPF0161 family.

It is found in the cell inner membrane. Functionally, could be involved in insertion of integral membrane proteins into the membrane. The polypeptide is Putative membrane protein insertion efficiency factor (Thermotoga neapolitana (strain ATCC 49049 / DSM 4359 / NBRC 107923 / NS-E)).